We begin with the raw amino-acid sequence, 454 residues long: Bifunctional protein GlmU (454 aa).

Residues 1–228 (MTLPLHVVIL…PQDVEGANDP (228 aa)) form a pyrophosphorylase region. Residues 10–13 (LAAG), Lys24, Gln76, 81–82 (GT), 103–105 (YGD), Gly138, Glu153, Asn168, and Asn226 each bind UDP-N-acetyl-alpha-D-glucosamine. Asp105 is a binding site for Mg(2+). Asn226 is a Mg(2+) binding site. Positions 229 to 249 (WQLAQLERAWQLRAARALCLQ) are linker. Positions 250–454 (GVRMADPARV…IEGWERPKKK (205 aa)) are N-acetyltransferase. UDP-N-acetyl-alpha-D-glucosamine is bound by residues Arg332 and Lys350. His362 acts as the Proton acceptor in catalysis. The UDP-N-acetyl-alpha-D-glucosamine site is built by Tyr365 and Asn376. Acetyl-CoA contacts are provided by residues Ala379, 385–386 (NY), Ser404, Ala422, and Arg439.

In the N-terminal section; belongs to the N-acetylglucosamine-1-phosphate uridyltransferase family. This sequence in the C-terminal section; belongs to the transferase hexapeptide repeat family. As to quaternary structure, homotrimer. It depends on Mg(2+) as a cofactor.

The protein localises to the cytoplasm. It catalyses the reaction alpha-D-glucosamine 1-phosphate + acetyl-CoA = N-acetyl-alpha-D-glucosamine 1-phosphate + CoA + H(+). It carries out the reaction N-acetyl-alpha-D-glucosamine 1-phosphate + UTP + H(+) = UDP-N-acetyl-alpha-D-glucosamine + diphosphate. Its pathway is nucleotide-sugar biosynthesis; UDP-N-acetyl-alpha-D-glucosamine biosynthesis; N-acetyl-alpha-D-glucosamine 1-phosphate from alpha-D-glucosamine 6-phosphate (route II): step 2/2. It functions in the pathway nucleotide-sugar biosynthesis; UDP-N-acetyl-alpha-D-glucosamine biosynthesis; UDP-N-acetyl-alpha-D-glucosamine from N-acetyl-alpha-D-glucosamine 1-phosphate: step 1/1. It participates in bacterial outer membrane biogenesis; LPS lipid A biosynthesis. Functionally, catalyzes the last two sequential reactions in the de novo biosynthetic pathway for UDP-N-acetylglucosamine (UDP-GlcNAc). The C-terminal domain catalyzes the transfer of acetyl group from acetyl coenzyme A to glucosamine-1-phosphate (GlcN-1-P) to produce N-acetylglucosamine-1-phosphate (GlcNAc-1-P), which is converted into UDP-GlcNAc by the transfer of uridine 5-monophosphate (from uridine 5-triphosphate), a reaction catalyzed by the N-terminal domain. In Xanthomonas campestris pv. campestris (strain B100), this protein is Bifunctional protein GlmU.